Consider the following 109-residue polypeptide: U26-theraphotoxin-Cg1b (109 aa).

A signal peptide spans 1 to 18 (MNTIIPLLLLSLLITVYA). A propeptide spanning residues 19-67 (YALEDGNKEEMQDIAESEFEASNEMLQLAHLLEADRAETEEDRNSRQKR) is cleaved from the precursor. 3 disulfides stabilise this stretch: cysteine 68/cysteine 83, cysteine 75/cysteine 88, and cysteine 82/cysteine 103.

Belongs to the neurotoxin 14 (magi-1) family. 07 (Jztx-56) subfamily. In terms of tissue distribution, expressed by the venom gland.

The protein resides in the secreted. In terms of biological role, probable ion channel inhibitor. In Chilobrachys guangxiensis (Chinese earth tiger tarantula), this protein is U26-theraphotoxin-Cg1b.